A 249-amino-acid chain; its full sequence is Putative SAP domain-containing protein 049L (249 aa).

Basic and acidic residues-rich tracts occupy residues 1 to 12 (MAAPKAEGEDKP), 22 to 38 (PKPE…KEFC), and 95 to 107 (KKAE…KLDE). Residues 1–110 (MAAPKAEGED…DDKKLDEATG (110 aa)) form a disordered region. The 35-residue stretch at 119-153 (LSKLTIQTLKGMCKTRNLKISGNKAALVQRLIEAD) folds into the SAP domain.

The chain is Putative SAP domain-containing protein 049L from Frog virus 3 (isolate Goorha) (FV-3).